Here is a 340-residue protein sequence, read N- to C-terminus: Probable D,D-dipeptide transport system permease protein DdpB (340 aa).

The Periplasmic segment spans residues 1–11; the sequence is MTFWSILRQRC. Residues 12 to 32 form a helical membrane-spanning segment; sequence WGLVLVVAGVCVITFIISHLI. The Cytoplasmic portion of the chain corresponds to 33–104; that stretch reads PGDPARLLAG…IFFPATLELA (72 aa). The ABC transmembrane type-1 domain maps to 97-327; the sequence is FPATLELAFG…LVNLVVDLLY (231 aa). The chain crosses the membrane as a helical span at residues 105–125; that stretch reads FGALLLALLIGIPLGILSAVW. Over 126-135 the chain is Periplasmic; that stretch reads RNRWLDHLVR. Residues 136-156 traverse the membrane as a helical segment; sequence IMAITGISTPAFWLGLGVIVL. The Cytoplasmic portion of the chain corresponds to 157–199; it reads FYGHLQILPGGGRLDDWLDPPTHVTGFYLLDALLEGNGEVFFN. The chain crosses the membrane as a helical span at residues 200-220; it reads ALQHLILPALTLAFVHLGIVA. At 221–246 the chain is on the periplasmic side; the sequence is RQIRSAMLEQLSEDYIRTARASGLPG. A helical transmembrane segment spans residues 247 to 269; that stretch reads WYIVLCYALPNALIPSITVLGLA. The Cytoplasmic portion of the chain corresponds to 270–279; sequence LGDLLYGAVL. A helical transmembrane segment spans residues 280-300; the sequence is TETVFAWPGMGAWVVTSIQAL. Residue Asp301 is a topological domain, periplasmic. Residues 302 to 322 traverse the membrane as a helical segment; it reads FPAVMGFAVVVSFAYVLVNLV. Topologically, residues 323–340 are cytoplasmic; sequence VDLLYLWIDPRIGRGGGE.

The protein belongs to the binding-protein-dependent transport system permease family. OppBC subfamily. As to quaternary structure, the complex is composed of two ATP-binding proteins (DdpD and DdpF), two transmembrane proteins (DdpB and DdpC) and a solute-binding protein (DdpA).

Its subcellular location is the cell inner membrane. Its function is as follows. Part of the ABC transporter complex DdpABCDF, which is probably involved in D,D-dipeptide transport. Probably responsible for the translocation of the substrate across the membrane. The chain is Probable D,D-dipeptide transport system permease protein DdpB (ddpB) from Escherichia coli (strain K12).